A 591-amino-acid chain; its full sequence is Thiol:disulfide interchange protein DsbD 1 (591 aa).

Positions 1–18 are cleaved as a signal peptide; that stretch reads MRRLLTLILLLVALPAGA. Topologically, residues 19–175 are periplasmic; that stretch reads GLFDSRPGAS…GPLEHKGKRS (157 aa). Intrachain disulfides connect C134-C140 and C191-C313. Residues 176–196 form a helical membrane-spanning segment; sequence LLFFFLAGLTLTFTPCVLPML. At 197-213 the chain is on the cytoplasmic side; that stretch reads PILSGVVLRGRPGGGRG. Residues 214–234 form a helical membrane-spanning segment; the sequence is FVLSLAYVLPMALCFALLGAL. The Periplasmic portion of the chain corresponds to 235–251; it reads MGMFGASLNLQAQLQSP. A helical transmembrane segment spans residues 252-272; it reads WVLVPFAAFFALFAVAMFGFF. The Cytoplasmic segment spans residues 273–295; sequence ELRLPGFIREPLDRLAGDARGGS. A helical membrane pass occupies residues 296 to 316; sequence ILGAATLGVLSSLLVSPCVSA. The Periplasmic portion of the chain corresponds to 317–338; that stretch reads PLAASLLYISASGDAWGGGLQL. The helical transmembrane segment at 339 to 359 threads the bilayer; the sequence is FALGLGMGTPLVVFGAGGGAL. Residues 360-365 lie on the Cytoplasmic side of the membrane; it reads LPKSGA. The helical transmembrane segment at 366-386 threads the bilayer; sequence WMNGVRNAFGVLLLAVAVWLL. Over 387–392 the chain is Periplasmic; that stretch reads ERVVSG. The helical transmembrane segment at 393–413 threads the bilayer; that stretch reads PVALMLWGMLAGGAGLALGAL. The Cytoplasmic portion of the chain corresponds to 414–423; sequence EFTPKSAARR. A helical transmembrane segment spans residues 424 to 444; it reads LLQLLGLMFLTYAVAAWIGAL. Topologically, residues 445–591 are periplasmic; the sequence is QGESDPIHPL…ERLRRAATRQ (147 aa). The Thioredoxin domain maps to 452–589; it reads HPLGRSVPSI…LAERLRRAAT (138 aa). C504 and C507 are joined by a disulfide.

Belongs to the thioredoxin family. DsbD subfamily.

The protein localises to the cell inner membrane. It catalyses the reaction [protein]-dithiol + NAD(+) = [protein]-disulfide + NADH + H(+). It carries out the reaction [protein]-dithiol + NADP(+) = [protein]-disulfide + NADPH + H(+). Required to facilitate the formation of correct disulfide bonds in some periplasmic proteins and for the assembly of the periplasmic c-type cytochromes. Acts by transferring electrons from cytoplasmic thioredoxin to the periplasm. This transfer involves a cascade of disulfide bond formation and reduction steps. This chain is Thiol:disulfide interchange protein DsbD 1, found in Pseudomonas aeruginosa (strain ATCC 15692 / DSM 22644 / CIP 104116 / JCM 14847 / LMG 12228 / 1C / PRS 101 / PAO1).